The sequence spans 225 residues: U2 small nuclear ribonucleoprotein B'' (225 aa).

An RRM 1 domain is found at His7–Thr86. Residues Ala99 to Pro145 are disordered. Lys111 carries the N6-acetyllysine; alternate modification. Residue Lys111 forms a Glycyl lysine isopeptide (Lys-Gly) (interchain with G-Cter in SUMO2); alternate linkage. Over residues Val113–Lys123 the composition is skewed to low complexity. Positions Gly127–Asn141 are enriched in polar residues. Position 151 is a phosphotyrosine (Tyr151). Residues Tyr151 to Lys225 enclose the RRM 2 domain.

This sequence belongs to the RRM U1 A/B'' family. As to quaternary structure, identified in the spliceosome B complex. Identified in the spliceosome C complex. Present in a spliceosome complex assembled in vitro, and composed of SNRPB2, HPRP8BP and CRNKL1. Contributes to the binding of stem loop IV of U2 snRNA with SNRPP1.

The protein resides in the nucleus. In terms of biological role, involved in pre-mRNA splicing as component of the spliceosome. Associated with sn-RNP U2, where it contributes to the binding of stem loop IV of U2 snRNA. This chain is U2 small nuclear ribonucleoprotein B'' (SNRPB2), found in Homo sapiens (Human).